Here is a 213-residue protein sequence, read N- to C-terminus: Probable lipid phosphate phosphatase beta (213 aa).

The next 5 helical transmembrane spans lie at 30-50, 67-87, 118-138, 158-178, and 181-201; these read PFLP…RFSF, VPFL…KLIF, VFFV…SMTG, VEVV…RILL, and HYVL…LFAL.

The protein belongs to the PA-phosphatase related phosphoesterase family.

The protein resides in the membrane. The chain is Probable lipid phosphate phosphatase beta (LPPB) from Arabidopsis thaliana (Mouse-ear cress).